The chain runs to 1256 residues: SNF2 domain-containing protein CLASSY 1 (1256 aa).

2 disordered regions span residues 269–290 and 448–467; these read ELRR…EIQP and GNVV…VSRE. Residues 278 to 290 show a composition bias toward basic and acidic residues; the sequence is GRPERYGDSEIQP. Positions 451–463 are enriched in basic residues; the sequence is VHKRNGPHSRIRS. The Helicase ATP-binding domain occupies 699 to 898; the sequence is DPSSDKIGGC…FNTLCLARPK (200 aa). 712–719 serves as a coordination point for ATP; that stretch reads HTPGAGKT. Positions 849–852 match the DEAH box motif; the sequence is DEGH. The 162-residue stretch at 1061–1222 folds into the Helicase C-terminal domain; sequence FVLNLVFRVV…EFVEDPSQWQ (162 aa).

Belongs to the helicase family. In terms of assembly, interacts with NRPD1, NRPD3 and SHH1.

It localises to the nucleus. The protein localises to the nucleoplasm. Its subcellular location is the nucleolus. Functionally, probable chromatin remodeling factor. Required for the initial establishment of DNA methylation and for accumulation of 24-nt siRNAs. May act on RNA templates by remodeling ribonucleoprotein structures and thereby influencing the availability of the RNA to polymerases. The sequence is that of SNF2 domain-containing protein CLASSY 1 (CLSY1) from Arabidopsis thaliana (Mouse-ear cress).